We begin with the raw amino-acid sequence, 350 residues long: Quercetin 2,3-dioxygenase (350 aa).

The interval 1–145 (DTSSLIVEDA…FYYLGTNATD (145 aa)) is cupin 1. Positions 66, 68, and 73 each coordinate Cu cation. Position 66 (H66) interacts with substrate. A substrate-binding site is contributed by E73. N-linked (GlcNAc...) asparagine glycans are attached at residues N90 and N109. Cu cation is bound at residue H112. A glycan (N-linked (GlcNAc...) asparagine) is linked at N142. The linker stretch occupies residues 146 to 205 (TTHTPYIPSSSDSSSTTGPDSSTISTLQSFDVYAELSFTPRTDTVNGTAPANTVWHTGAN). A disordered region spans residues 148–167 (HTPYIPSSSDSSSTTGPDSS). Residues 152 to 167 (IPSSSDSSSTTGPDSS) show a composition bias toward low complexity. Residues N191 and N248 are each glycosylated (N-linked (GlcNAc...) asparagine). Residues 206-350 (ALASTAGDPY…WSSVSFPADW (145 aa)) form a cupin 2 region.

As to quaternary structure, homodimer. Cu cation is required as a cofactor. In terms of processing, the N-linked glycan at Asn-191 consists of Man(5)-GlcNAc(2).

The enzyme catalyses quercetin + O2 = 2-(3,4-dihydroxybenzoyloxy)-4,6-dihydroxybenzoate + CO. Its pathway is flavonoid metabolism; quercetin degradation. Inhibited by diethyldithiocarbamate and kojic acid. Performs the first step in the degradation of the flavonoid quercetin by a dioxygenase reaction. The enzyme catalyzes the cleavage of the O-heteroaromatic ring of the flavonol quercetin yielding the depside 2-protocatechuoyl-phloroglucinol carboxylic acid and carbon monoxide. This involves the remarkable dioxygenolytic cleavage of two carbon-carbon bonds. This is Quercetin 2,3-dioxygenase from Aspergillus japonicus.